The following is a 178-amino-acid chain: Inorganic pyrophosphatase (178 aa).

Substrate is bound by residues lysine 30, arginine 44, and tyrosine 56. Positions 66, 71, and 103 each coordinate Mg(2+). Substrate is bound at residue tyrosine 142.

This sequence belongs to the PPase family. As to quaternary structure, homohexamer. Mg(2+) is required as a cofactor.

The protein resides in the cytoplasm. It catalyses the reaction diphosphate + H2O = 2 phosphate + H(+). In terms of biological role, catalyzes the hydrolysis of inorganic pyrophosphate (PPi) forming two phosphate ions. The protein is Inorganic pyrophosphatase of Xylella fastidiosa (strain 9a5c).